A 62-amino-acid chain; its full sequence is Mastoparan-AF (62 aa).

Residues 1–25 (MKNTILILFTAFIALLGFFGMSAEA) form the signal peptide. 4 AXPX repeats span residues 25 to 28 (ADPI), 29 to 32 (ADPI), 33 to 36 (ADPI), and 43 to 46 (ADPE). Residues 26 to 47 (DPIADPIADPISGPNAEADPEA) constitute a propeptide that is removed on maturation. Phe61 carries the phenylalanine amide modification.

It belongs to the MCD family. Mastoparan subfamily. In terms of tissue distribution, expressed by the venom gland.

Its subcellular location is the secreted. It localises to the target cell membrane. Functionally, antimicrobial and mast cell degranulating peptide. Has broad spectrum antibacterial activity against both Gram-positive and Gram-negative bacteria (S.aureus MIC=16-32 ug/ml, S.xylosus MIC=1.5 ug/ml, S.alactolyticus MIC=8 ug/ml, C.koseri MIC=4 ug/ml, E.coli MIC=4-32 ug/ml, K.pneumoniae MIC=32 ug/ml, P.aerugiosa MIC=96 ug/ml, S.choleraesuis MIC=16 ug/ml, S.typhimurium MIC=32 ug/ml, V.parahamelytics MIC=16 ug/ml). Is also active on multi-antibiotic resistant hemolytic E.coli O157:H7. Acts by affecting membrane permeability. On E.coli O157:H7, acts through multiple membrane disruption patterns, including large perforations (full opening) at apical ends (hollow tubes), vesicle budding, forming dents, and membrane corrugation and invagination leading to irregular pits or pores. Exerts 40% lower membrane permeabilization activities on E.coli O157:H7 than on the non-pathogen E.coli BL21. Shows little hemolytic activities on sheep, chicken and human erythrocytes, but with a higher activity on chicken erythrocytes. Its mast cell degranulation activity may be related to the activation of G-protein coupled receptors in mast cells as well as interaction with other proteins located in cell endosomal membranes in the mast cells. This chain is Mastoparan-AF, found in Vespa affinis (Lesser banded hornet).